A 228-amino-acid chain; its full sequence is Methylthioribulose-1-phosphate dehydratase (228 aa).

Cys-92 lines the substrate pocket. Zn(2+)-binding residues include His-110 and His-112. Catalysis depends on Glu-135, which acts as the Proton donor/acceptor. His-192 serves as a coordination point for Zn(2+).

It belongs to the aldolase class II family. MtnB subfamily. The cofactor is Zn(2+).

The protein localises to the cytoplasm. It localises to the nucleus. The catalysed reaction is 5-(methylsulfanyl)-D-ribulose 1-phosphate = 5-methylsulfanyl-2,3-dioxopentyl phosphate + H2O. The protein operates within amino-acid biosynthesis; L-methionine biosynthesis via salvage pathway; L-methionine from S-methyl-5-thio-alpha-D-ribose 1-phosphate: step 2/6. In terms of biological role, catalyzes the dehydration of methylthioribulose-1-phosphate (MTRu-1-P) into 2,3-diketo-5-methylthiopentyl-1-phosphate (DK-MTP-1-P). This is Methylthioribulose-1-phosphate dehydratase from Schizosaccharomyces pombe (strain 972 / ATCC 24843) (Fission yeast).